Reading from the N-terminus, the 233-residue chain is Small ribosomal subunit protein uS3 (233 aa).

Positions I39–R107 constitute a KH type-2 domain. A disordered region spans residues G211–K233. Residues Q213–P222 are compositionally biased toward basic and acidic residues. A compositionally biased stretch (basic residues) spans K224–K233.

This sequence belongs to the universal ribosomal protein uS3 family. As to quaternary structure, part of the 30S ribosomal subunit. Forms a tight complex with proteins S10 and S14.

Its function is as follows. Binds the lower part of the 30S subunit head. Binds mRNA in the 70S ribosome, positioning it for translation. This Campylobacter lari (strain RM2100 / D67 / ATCC BAA-1060) protein is Small ribosomal subunit protein uS3.